A 342-amino-acid chain; its full sequence is Methionine import ATP-binding protein MetN (342 aa).

In terms of domain architecture, ABC transporter spans 2–241 (ITLEQVTKIY…PQQPITKRFV (240 aa)). 38–45 (GYSGAGKS) lines the ATP pocket.

This sequence belongs to the ABC transporter superfamily. Methionine importer (TC 3.A.1.24) family. The complex is composed of two ATP-binding proteins (MetN), two transmembrane proteins (MetI) and a solute-binding protein (MetQ).

It is found in the cell membrane. It catalyses the reaction L-methionine(out) + ATP + H2O = L-methionine(in) + ADP + phosphate + H(+). The catalysed reaction is D-methionine(out) + ATP + H2O = D-methionine(in) + ADP + phosphate + H(+). Its function is as follows. Part of the ABC transporter complex MetNIQ involved in methionine import. Responsible for energy coupling to the transport system. The polypeptide is Methionine import ATP-binding protein MetN (Geobacillus kaustophilus (strain HTA426)).